The sequence spans 268 residues: Peptide transport system ATP-binding protein SapF (268 aa).

An ABC transporter domain is found at 6–251 (LEVRNLSKTF…PLHELTKRLI (246 aa)). ATP is bound at residue 47–54 (GENGSGKS).

This sequence belongs to the ABC transporter superfamily.

It is found in the cell inner membrane. Functionally, involved in a peptide intake transport system that plays a role in the resistance to antimicrobial peptides. In Escherichia coli O6:H1 (strain CFT073 / ATCC 700928 / UPEC), this protein is Peptide transport system ATP-binding protein SapF (sapF).